The chain runs to 134 residues: Putative nickel-responsive regulator (134 aa).

Ni(2+)-binding residues include histidine 78, histidine 89, histidine 91, and cysteine 97.

Belongs to the transcriptional regulatory CopG/NikR family. Ni(2+) serves as cofactor.

In terms of biological role, transcriptional regulator. The polypeptide is Putative nickel-responsive regulator (Chlorobaculum tepidum (strain ATCC 49652 / DSM 12025 / NBRC 103806 / TLS) (Chlorobium tepidum)).